The chain runs to 229 residues: Large ribosomal subunit protein uL1 (229 aa).

This sequence belongs to the universal ribosomal protein uL1 family. Part of the 50S ribosomal subunit.

Functionally, binds directly to 23S rRNA. The L1 stalk is quite mobile in the ribosome, and is involved in E site tRNA release. Protein L1 is also a translational repressor protein, it controls the translation of the L11 operon by binding to its mRNA. The chain is Large ribosomal subunit protein uL1 from Enterococcus faecalis (strain ATCC 700802 / V583).